The chain runs to 182 residues: Gamma-crystallin N (182 aa).

3 consecutive Beta/gamma crystallin 'Greek key' domains span residues 6-46, 47-89, and 95-136; these read GKIT…HVES, GAWV…RPVG, and FRLE…KVYG. The disordered stretch occupies residues 153 to 182; sequence LSSSLQSDQGPEEATTKPATTQPPFLTANL. Over residues 169 to 182 the composition is skewed to polar residues; it reads KPATTQPPFLTANL.

This sequence belongs to the beta/gamma-crystallin family. In terms of assembly, monomer. As to expression, not specifically expressed in eye.

This chain is Gamma-crystallin N, found in Homo sapiens (Human).